The chain runs to 456 residues: Equilibrative nucleoside transporter 2 (456 aa).

A helical transmembrane segment spans residues 13–33; that stretch reads LVGISFFILGLGTLLPWNFFI. N-linked (GlcNAc...) asparagine glycosylation is found at asparagine 48 and asparagine 57. 5 helical membrane passes run 70-90, 99-119, 124-144, 162-182, and 193-213; these read WVTL…SFLY, ILGS…LVKV, GPFF…SAVL, LFLS…LLSM, and LGYF…YLSL. Asparagine 225 carries N-linked (GlcNAc...) asparagine glycosylation. The residue at position 252 (serine 252) is a Phosphoserine. Transmembrane regions (helical) follow at residues 291-311, 324-344, 360-380, 386-406, and 432-452; these read WLTA…FPAI, WSQF…DWLG, LLPL…LCHV, LPIL…FAVS, and ALMT…SFLF.

The protein belongs to the SLC29A/ENT transporter (TC 2.A.57) family. Post-translationally, glycosylated. Highly expressed in skeletal muscle. Expressed in liver, lung, placenta, brain, heart, kidney and ovarian tissues. Expressed in testis at the blood-brain-barrier.

Its subcellular location is the apical cell membrane. It is found in the basolateral cell membrane. The enzyme catalyses inosine(in) = inosine(out). It carries out the reaction adenosine(in) = adenosine(out). It catalyses the reaction uridine(out) = uridine(in). The catalysed reaction is thymidine(in) = thymidine(out). The enzyme catalyses hypoxanthine(out) = hypoxanthine(in). It carries out the reaction adenine(out) = adenine(in). It catalyses the reaction cytidine(in) = cytidine(out). The catalysed reaction is thymine(out) = thymine(in). The enzyme catalyses uracil(in) = uracil(out). It carries out the reaction guanine(out) = guanine(in). It catalyses the reaction guanosine(in) = guanosine(out). Functionally, bidirectional uniporter involved in the facilitative transport of nucleosides and nucleobases, and contributes to maintaining their cellular homeostasis. Functions as a Na(+)-independent, passive transporter. Involved in the transport of nucleosides such as inosine, adenosine, uridine, thymidine, cytidine and guanosine. Also able to transport purine nucleobases (hypoxanthine, adenine, guanine) and pyrimidine nucleobases (thymine, uracil). Involved in nucleoside transport at basolateral membrane of kidney cells, allowing liver absorption of nucleoside metabolites. Mediates apical nucleoside uptake into Sertoli cells, thereby regulating the transport of nucleosides in testis across the blood-testis-barrier. Mediates both the influx and efflux of hypoxanthine in skeletal muscle microvascular endothelial cells to control the amount of intracellular hypoxanthine available for xanthine oxidase-mediated ROS production. In terms of biological role, non functional nucleoside transporter protein for adenosine or thymidine transport. Does not express on cell membrane. The protein is Equilibrative nucleoside transporter 2 of Homo sapiens (Human).